A 78-amino-acid polypeptide reads, in one-letter code: MSRVCQVTGKRPVAGNNRSHALNATKRRFLPNLHSHRFWVEGEKRFVTLRVSAKGMRVIDKKGIETVLADLRARGEKY.

The protein belongs to the bacterial ribosomal protein bL28 family.

The protein is Large ribosomal subunit protein bL28 of Pectobacterium carotovorum subsp. carotovorum (strain PC1).